An 892-amino-acid chain; its full sequence is Histone deacetylase 4 (892 aa).

The tract at residues 145–225 (NGNLSNLSVP…MSNVNGHDNS (81 aa)) is disordered. Composition is skewed to polar residues over residues 171–192 (SAPTSSRKSDLPRTNSTTISQL) and 208–222 (ESNSQSNLMSNVNGH). The histone deacetylase stretch occupies residues 481-822 (STGLGYDPLM…VQALIGESDD (342 aa)). H628 is an active-site residue.

The protein belongs to the histone deacetylase family. HD type 2 subfamily.

The protein resides in the nucleus. It catalyses the reaction N(6)-acetyl-L-lysyl-[histone] + H2O = L-lysyl-[histone] + acetate. Its function is as follows. Responsible for the deacetylation of lysine residues on the N-terminal part of the core histones (H2A, H2B, H3 and H4). Histone deacetylation gives a tag for epigenetic repression and plays an important role in transcriptional regulation, cell cycle progression and developmental events. Histone deacetylases act via the formation of large multiprotein complexes. The chain is Histone deacetylase 4 (hda-4) from Caenorhabditis briggsae.